We begin with the raw amino-acid sequence, 696 residues long: Elongation factor G 2 (696 aa).

The tr-type G domain occupies 5-281 (SKYRNIGIFA…AVVDYLPSPT (277 aa)). GTP is bound by residues 14–21 (AHVDAGKT), 78–82 (DTPGH), and 132–135 (NKLD).

The protein belongs to the TRAFAC class translation factor GTPase superfamily. Classic translation factor GTPase family. EF-G/EF-2 subfamily.

It is found in the cytoplasm. In terms of biological role, catalyzes the GTP-dependent ribosomal translocation step during translation elongation. During this step, the ribosome changes from the pre-translocational (PRE) to the post-translocational (POST) state as the newly formed A-site-bound peptidyl-tRNA and P-site-bound deacylated tRNA move to the P and E sites, respectively. Catalyzes the coordinated movement of the two tRNA molecules, the mRNA and conformational changes in the ribosome. This Vibrio parahaemolyticus serotype O3:K6 (strain RIMD 2210633) protein is Elongation factor G 2.